The primary structure comprises 158 residues: NAD(P)H-quinone oxidoreductase subunit J, chloroplastic (158 aa).

The protein belongs to the complex I 30 kDa subunit family. In terms of assembly, NDH is composed of at least 16 different subunits, 5 of which are encoded in the nucleus.

The protein localises to the plastid. It localises to the chloroplast thylakoid membrane. It carries out the reaction a plastoquinone + NADH + (n+1) H(+)(in) = a plastoquinol + NAD(+) + n H(+)(out). It catalyses the reaction a plastoquinone + NADPH + (n+1) H(+)(in) = a plastoquinol + NADP(+) + n H(+)(out). NDH shuttles electrons from NAD(P)H:plastoquinone, via FMN and iron-sulfur (Fe-S) centers, to quinones in the photosynthetic chain and possibly in a chloroplast respiratory chain. The immediate electron acceptor for the enzyme in this species is believed to be plastoquinone. Couples the redox reaction to proton translocation, and thus conserves the redox energy in a proton gradient. The sequence is that of NAD(P)H-quinone oxidoreductase subunit J, chloroplastic from Buxus microphylla (Littleleaf boxwood).